The primary structure comprises 311 residues: JNK1/MAPK8-associated membrane protein (311 aa).

Residues 1–57 are Lumenal-facing; that stretch reads MAVDIQPACLGLYCGKTLLFKNGSTEIYGECGVCPRGQRTNAQKYCQPCTESPELYD. Asn-22 carries an N-linked (GlcNAc...) asparagine glycan. The chain crosses the membrane as a helical span at residues 58 to 78; it reads WLYLGFMAMLPLVLHWFFIEW. Residues 79–87 are Cytoplasmic-facing; that stretch reads YSGKKSSSA. The chain crosses the membrane as a helical span at residues 88 to 108; sequence LFQHITALFECSMAAIITLLV. The Lumenal segment spans residues 109–149; that stretch reads SDPVGVLYIRSCRVLMLSDWYTMLYNPSPDYVTTVHCTHEA. A helical transmembrane segment spans residues 150 to 170; it reads VYPLYTIVFIYYAFCLVLMML. Residues 171 to 188 lie on the Cytoplasmic side of the membrane; that stretch reads LRPLLVKKIACGLGKSDR. Residues 189–209 traverse the membrane as a helical segment; it reads FKSIYAALYFFPILTVLQAVG. A topological domain (lumenal) is located at residue Gly-210. Residues 211 to 231 form a helical membrane-spanning segment; that stretch reads GLLYYAFPYIILVLSLVTLAV. Topologically, residues 232–250 are cytoplasmic; the sequence is YMSASEIENCYDLLVRKKR. Residues 251 to 271 form a helical membrane-spanning segment; that stretch reads LIVLFSHWLLHAYGIISISRV. At 272–277 the chain is on the lumenal side; the sequence is DKLEQD. Residues 278-298 traverse the membrane as a helical segment; that stretch reads LPLLALVPTPALFYLFTAKFT. The Cytoplasmic portion of the chain corresponds to 299 to 311; that stretch reads EPSRILSEGANGH.

In terms of assembly, interacts with RNF5 and MAPK8, but not with MAPK9. Binding to MAPK8 occurs before and after exposure to stress, such as UV irradiation. After exposure to stress, interacts with phosphorylated MAPK8. Competes with DUSP10 for MAPK8 binding. Associates with multiple components of the proteasome and with ERAD regulatory proteins including AMFR/GP78, CANX, PSMC1, PSMC2, PSMC3/TBP1, PSMC5, PSMC6, PSMD8, SEC61-ALPHA and UFD1. Interacts with DERL1 (in the presence of misfolded protein CFTR(F508del)). Post-translationally, ubiquitinated by RNF5 via 'Lys-63'-linked ubiquitin linkage in a UBE2N-dependent manner. Ubiquitination decreases association with components of the proteasome and ERAD.

The protein localises to the endoplasmic reticulum membrane. Functionally, regulates the duration of MAPK8 activity in response to various stress stimuli. Facilitates degradation of misfolded endoplasmic reticulum (ER) proteins through the recruitment of components of the proteasome and endoplasmic reticulum-associated degradation (ERAD) system. The sequence is that of JNK1/MAPK8-associated membrane protein (JKAMP) from Homo sapiens (Human).